Reading from the N-terminus, the 594-residue chain is Probable translation initiation factor IF-2 (594 aa).

The region spanning 3 to 220 is the tr-type G domain; that stretch reads IRSPIVSVLG…MLMGLAQQYL (218 aa). Residues 12 to 19 are G1; sequence GHVDHGKT. 12–19 is a GTP binding site; sequence GHVDHGKT. The tract at residues 37 to 41 is G2; the sequence is GITQH. The segment at 76 to 79 is G3; it reads DTPG. GTP-binding positions include 76–80 and 130–133; these read DTPGH and NKID. Residues 130 to 133 are G4; the sequence is NKID. Positions 198 to 200 are G5; sequence SAI.

This sequence belongs to the TRAFAC class translation factor GTPase superfamily. Classic translation factor GTPase family. IF-2 subfamily.

Its function is as follows. Function in general translation initiation by promoting the binding of the formylmethionine-tRNA to ribosomes. Seems to function along with eIF-2. In Methanothermobacter thermautotrophicus (strain ATCC 29096 / DSM 1053 / JCM 10044 / NBRC 100330 / Delta H) (Methanobacterium thermoautotrophicum), this protein is Probable translation initiation factor IF-2 (infB).